The sequence spans 287 residues: MASGREIKSKIKSVQNTRKVTRALEMVSASKIRKAQEQMKISRPYAQAMKQMTGHLAQANTDYLHPFLIAHKQVKRIGYIVISSDRGLAGGLNNNLFRKMLGEMRQWQDKGAEVDIVTIGQKASVFFRRIKVNILGSVTHLGDTPRLEQLIGVIKVMLDAYTEEKLDRVYLVYNRFINTMVQKASFDQLLPLLAAKDKVAHHDWDYLYEPDAATVLEHVMRRYIESLVYQAMLENIASEHAARMVAMKAASDNANKLIGTLQLVYNKARQAAITQEISEIVGGAAAV.

The protein belongs to the ATPase gamma chain family. In terms of assembly, F-type ATPases have 2 components, CF(1) - the catalytic core - and CF(0) - the membrane proton channel. CF(1) has five subunits: alpha(3), beta(3), gamma(1), delta(1), epsilon(1). CF(0) has three main subunits: a, b and c.

The protein resides in the cell inner membrane. Produces ATP from ADP in the presence of a proton gradient across the membrane. The gamma chain is believed to be important in regulating ATPase activity and the flow of protons through the CF(0) complex. This is ATP synthase gamma chain from Xylella fastidiosa (strain 9a5c).